The sequence spans 365 residues: MFEINPIRNKISDLTERTQVLRGYLDFDAKVERLEEVNAELEQPDVWNEPEKAQALGKERVALEGVVNTIHTLDQGLEDVEGLLELAIEAEDEATFHEAVAELEELEQQLAKLEFRRMFSGQHDAADCYVDLQAGSGGTEAQDWTEMLLRMYLRWAESKGFKTELMEVSDGDVAGIKSATIKVSGEYAFGWLRTETGIHRLVRKSPFDSNNRRHTSFSAAFVYPEIDDDIDIDINPADLRIDVYRASGAGGQHVNKTESAVRITHIPSGIVVQCQNDRSQHKNKDQCMKQLKAKLYEMELQKKNADKQAMEDNKSDIGWGSQIRSYVLDDSRIKDLRTGVENRNTQAVLDGDLDRFIEASLKAGL.

Q252 carries the post-translational modification N5-methylglutamine.

Belongs to the prokaryotic/mitochondrial release factor family. In terms of processing, methylated by PrmC. Methylation increases the termination efficiency of RF2.

It localises to the cytoplasm. Its function is as follows. Peptide chain release factor 2 directs the termination of translation in response to the peptide chain termination codons UGA and UAA. This chain is Peptide chain release factor 2, found in Pasteurella multocida (strain Pm70).